A 77-amino-acid chain; its full sequence is MKEQKWVHEGLITESLPNGMFRVRLDNEDLILGYISGRIRRSFIRILPGDRVKIEVSRYDSTRGRIIYRLRNKDSND.

An S1-like domain is found at 1–71 (MKEQKWVHEG…TRGRIIYRLR (71 aa)).

Belongs to the IF-1 family. In terms of assembly, component of the 30S ribosomal translation pre-initiation complex which assembles on the 30S ribosome in the order IF-2 and IF-3, IF-1 and N-formylmethionyl-tRNA(fMet); mRNA recruitment can occur at any time during PIC assembly.

Its subcellular location is the plastid. It localises to the chloroplast. One of the essential components for the initiation of protein synthesis. Stabilizes the binding of IF-2 and IF-3 on the 30S subunit to which N-formylmethionyl-tRNA(fMet) subsequently binds. Helps modulate mRNA selection, yielding the 30S pre-initiation complex (PIC). Upon addition of the 50S ribosomal subunit IF-1, IF-2 and IF-3 are released leaving the mature 70S translation initiation complex. The sequence is that of Translation initiation factor IF-1, chloroplastic from Cercidiphyllum japonicum (Katsura tree).